Reading from the N-terminus, the 346-residue chain is Anthocyanidin 3-O-glucosyltransferase 2 (346 aa).

UDP-alpha-D-glucose contacts are provided by Ala-221, Gln-223, His-238, Trp-241, Asn-242, Ser-243, and Glu-246. Ala-261 serves as a coordination point for an anthocyanidin. UDP-alpha-D-glucose contacts are provided by Glu-262 and Gln-263.

Belongs to the UDP-glycosyltransferase family. Expressed in cotyledons, roots and leaves.

The catalysed reaction is an anthocyanidin + UDP-alpha-D-glucose + H(+) = an anthocyanidin 3-O-beta-D-glucoside + UDP. It participates in pigment biosynthesis; anthocyanin biosynthesis. Functionally, in the presence of other necessary color factors, this glycosylation reaction allows the accumulation of anthocyanin pigments. This Manihot esculenta (Cassava) protein is Anthocyanidin 3-O-glucosyltransferase 2 (GT2).